A 233-amino-acid chain; its full sequence is tRNA (guanine-N(7)-)-methyltransferase (233 aa).

A disordered region spans residues 1–22 (MIDENHPMRAAGNFFGRRHGKP). S-adenosyl-L-methionine is bound by residues Glu64, Glu89, Asp116, and Asp138. The active site involves Asp138. Residues Lys142, Asp174, and 212-215 (TRYE) contribute to the substrate site.

Belongs to the class I-like SAM-binding methyltransferase superfamily. TrmB family.

The catalysed reaction is guanosine(46) in tRNA + S-adenosyl-L-methionine = N(7)-methylguanosine(46) in tRNA + S-adenosyl-L-homocysteine. It functions in the pathway tRNA modification; N(7)-methylguanine-tRNA biosynthesis. Its function is as follows. Catalyzes the formation of N(7)-methylguanine at position 46 (m7G46) in tRNA. The protein is tRNA (guanine-N(7)-)-methyltransferase of Brucella melitensis biotype 1 (strain ATCC 23456 / CCUG 17765 / NCTC 10094 / 16M).